The primary structure comprises 1375 residues: DNA-directed RNA polymerase subunit beta' (1375 aa).

Cys70, Cys72, Cys85, and Cys88 together coordinate Zn(2+). Residues Asp461, Asp463, and Asp465 each contribute to the Mg(2+) site. The Zn(2+) site is built by Cys797, Cys871, Cys878, and Cys881.

It belongs to the RNA polymerase beta' chain family. The RNAP catalytic core consists of 2 alpha, 1 beta, 1 beta' and 1 omega subunit. When a sigma factor is associated with the core the holoenzyme is formed, which can initiate transcription. Mg(2+) serves as cofactor. Requires Zn(2+) as cofactor.

It catalyses the reaction RNA(n) + a ribonucleoside 5'-triphosphate = RNA(n+1) + diphosphate. DNA-dependent RNA polymerase catalyzes the transcription of DNA into RNA using the four ribonucleoside triphosphates as substrates. The polypeptide is DNA-directed RNA polymerase subunit beta' (Neorickettsia sennetsu (strain ATCC VR-367 / Miyayama) (Ehrlichia sennetsu)).